A 608-amino-acid chain; its full sequence is Actin-interacting protein 1 (608 aa).

11 WD repeats span residues glutamate 62–lysine 101, proline 106–serine 149, glycine 150–threonine 190, aspartate 193–glutamate 232, alanine 237–glutamate 276, glycine 323–isoleucine 362, glycine 366–tyrosine 403, proline 444–lysine 483, aspartate 487–asparagine 526, phenylalanine 531–isoleucine 570, and histidine 575–asparagine 607.

Belongs to the WD repeat AIP1 family. In terms of tissue distribution, expressed in pupal wing cells.

It localises to the cytoplasm. The protein localises to the cytoskeleton. Induces disassembly of actin filaments in conjunction with ADF/cofilin family proteins. Together with GMF, promotes Arp2/3-nucleated actin filament array disassembly. Essential for organismal and cell viability. Required for the development of normal wing cell planar polarity. In egg chambers and together with GMF, plays an important role in directional migration of border cell clusters. In Drosophila melanogaster (Fruit fly), this protein is Actin-interacting protein 1 (flr).